The chain runs to 203 residues: Eukaryotic translation initiation factor isoform 4E (203 aa).

Positions 1-25 (MATETAGAVVESSSAATVPSPAPEA) are enriched in low complexity. The disordered stretch occupies residues 1–27 (MATETAGAVVESSSAATVPSPAPEAGS). Residues 47-52 (QGAAWG), Lys-79, and 97-98 (WE) each bind mRNA. A disulfide bridge links Cys-102 with Cys-141. 148-153 (RQRQDK) lines the mRNA pocket.

The protein belongs to the eukaryotic initiation factor 4E family. As to quaternary structure, EIF4F is a multi-subunit complex, the composition of which varies with external and internal environmental conditions. It is composed of at least EIF4A, EIF4E and EIF4G. EIF4E is also known to interact with other partners. In higher plants two isoforms of EIF4F have been identified, named isoform EIF4F and isoform EIF(iso)4F. Isoform EIF4F has subunits p220 and p26, whereas isoform EIF(iso)4F has subunits p82 and p28. In terms of assembly, (Microbial infection) Interacts with the potyvirus peanut stripe virus (PStV) helper component proteinase (HC-Pro) in the cytoplasm and with PStV viral genome-linked protein (VPg) in the nucleus; these interactions are possible in susceptible hosts but impaired in resistant plants. In terms of processing, according to the redox status, the Cys-102-Cys-141 disulfide bridge may have a role in regulating protein function by affecting its ability to bind capped mRNA. In terms of tissue distribution, expressed ubiquitously with highest levels in young leaves and roots, and lowest levels in flowers.

Its subcellular location is the cytoplasm. The protein resides in the nucleus. Its function is as follows. Component of the protein complex eIF4F, which is involved in the recognition of the mRNA cap, ATP-dependent unwinding of 5'-terminal secondary structure and recruitment of mRNA to the ribosome. Recognizes and binds the 7-methylguanosine-containing mRNA cap during an early step in the initiation of protein synthesis and facilitates ribosome binding by inducing the unwinding of the mRNAs secondary structures. Key component of recessive resistance to potyviruses such as peanut stripe virus (PStV). Functionally, (Microbial infection) Susceptibility host factor required for viral infection by recruiting viral RNAs to the host ribosomal complex via an interaction with viral genome-linked protein (VPg). The protein is Eukaryotic translation initiation factor isoform 4E of Arachis hypogaea (Peanut).